Consider the following 453-residue polypeptide: F-box protein At4g27050 (453 aa).

The F-box domain maps to 3–51; the sequence is TDLISNLPDDVLGKILSLVPTKLAAATSVLSKRWRNLLPLVDSLDFDET.

In terms of assembly, part of a SCF (ASK-cullin-F-box) protein ligase complex.

It participates in protein modification; protein ubiquitination. Component of SCF(ASK-cullin-F-box) E3 ubiquitin ligase complexes, which may mediate the ubiquitination and subsequent proteasomal degradation of target proteins. In Arabidopsis thaliana (Mouse-ear cress), this protein is F-box protein At4g27050.